A 593-amino-acid chain; its full sequence is UvrABC system protein C (593 aa).

In terms of domain architecture, GIY-YIG spans 14-91 (DKPGCYLMKN…IKEHDPRYNV (78 aa)). The 36-residue stretch at 196–231 (EEMKQTLTEKMLQAAENMEFERAKEYRDQIKSIEAV) folds into the UVR domain.

Belongs to the UvrC family. Interacts with UvrB in an incision complex.

The protein resides in the cytoplasm. The UvrABC repair system catalyzes the recognition and processing of DNA lesions. UvrC both incises the 5' and 3' sides of the lesion. The N-terminal half is responsible for the 3' incision and the C-terminal half is responsible for the 5' incision. This chain is UvrABC system protein C, found in Brevibacillus brevis (strain 47 / JCM 6285 / NBRC 100599).